A 261-amino-acid polypeptide reads, in one-letter code: Cytochrome c oxidase subunit 3 (261 aa).

Residues 1-15 (MTHQTHAYHMVDPSP) are Mitochondrial matrix-facing. Residues 16-34 (WPLTGALSALLMTSGLTMW) form a helical membrane-spanning segment. Over 35 to 40 (FHYHSV) the chain is Mitochondrial intermembrane. A helical membrane pass occupies residues 41–66 (VLLFLGLMTNTLTMFQWWRDVVREGT). The Mitochondrial matrix portion of the chain corresponds to 67–72 (FQGHHT). The chain crosses the membrane as a helical span at residues 73–105 (PVVQEGLRYGMILFITSEVLFFTGFFWAFYHSS). Residues 106 to 128 (LAPTPELGSYWPPVGVYPLNPLE) are Mitochondrial intermembrane-facing. The helical transmembrane segment at 129 to 152 (VPLLNTSVLLASGVTITWAHHSLM) threads the bilayer. The Mitochondrial matrix portion of the chain corresponds to 153-155 (EGN). The helical transmembrane segment at 156-183 (RKNMLQALLITILLGVYFTLLQMFEYYE) threads the bilayer. Over 184–190 (ASFTISD) the chain is Mitochondrial intermembrane. The helical transmembrane segment at 191–223 (GIYGSTFFVTTGFHGLHVIIGSTFLLTCFIRQL) threads the bilayer. Topologically, residues 224–232 (KFHFTSNHH) are mitochondrial matrix. The helical transmembrane segment at 233 to 256 (FGFEAAAWYWHFVDVVWLFLYLSI) threads the bilayer. Topologically, residues 257-261 (YWWGS) are mitochondrial intermembrane.

It belongs to the cytochrome c oxidase subunit 3 family. Component of the cytochrome c oxidase (complex IV, CIV), a multisubunit enzyme composed of 14 subunits. The complex is composed of a catalytic core of 3 subunits MT-CO1, MT-CO2 and MT-CO3, encoded in the mitochondrial DNA, and 11 supernumerary subunits COX4I, COX5A, COX5B, COX6A, COX6B, COX6C, COX7A, COX7B, COX7C, COX8 and NDUFA4, which are encoded in the nuclear genome. The complex exists as a monomer or a dimer and forms supercomplexes (SCs) in the inner mitochondrial membrane with NADH-ubiquinone oxidoreductase (complex I, CI) and ubiquinol-cytochrome c oxidoreductase (cytochrome b-c1 complex, complex III, CIII), resulting in different assemblies (supercomplex SCI(1)III(2)IV(1) and megacomplex MCI(2)III(2)IV(2)).

The protein localises to the mitochondrion inner membrane. The enzyme catalyses 4 Fe(II)-[cytochrome c] + O2 + 8 H(+)(in) = 4 Fe(III)-[cytochrome c] + 2 H2O + 4 H(+)(out). Component of the cytochrome c oxidase, the last enzyme in the mitochondrial electron transport chain which drives oxidative phosphorylation. The respiratory chain contains 3 multisubunit complexes succinate dehydrogenase (complex II, CII), ubiquinol-cytochrome c oxidoreductase (cytochrome b-c1 complex, complex III, CIII) and cytochrome c oxidase (complex IV, CIV), that cooperate to transfer electrons derived from NADH and succinate to molecular oxygen, creating an electrochemical gradient over the inner membrane that drives transmembrane transport and the ATP synthase. Cytochrome c oxidase is the component of the respiratory chain that catalyzes the reduction of oxygen to water. Electrons originating from reduced cytochrome c in the intermembrane space (IMS) are transferred via the dinuclear copper A center (CU(A)) of subunit 2 and heme A of subunit 1 to the active site in subunit 1, a binuclear center (BNC) formed by heme A3 and copper B (CU(B)). The BNC reduces molecular oxygen to 2 water molecules using 4 electrons from cytochrome c in the IMS and 4 protons from the mitochondrial matrix. This is Cytochrome c oxidase subunit 3 (MT-CO3) from Mammuthus primigenius (Siberian woolly mammoth).